A 428-amino-acid chain; its full sequence is Probable anion transporter 6 (428 aa).

A signal peptide spans 1 to 22 (MKFPKRYAIVLLTFMCTNVCYI). A run of 11 helical transmembrane segments spans residues 47 to 67 (MILSMFYYGYVLSQIPGGWAA), 74 to 94 (LVLLLSFVLWSSICAVVPLDP), 98 to 118 (ILLVLSRLLVGVAQGLIFPSI), 137 to 157 (LTTSGMYLGAACGMLLLPSLV), 164 to 184 (SVFSVEAMLGVAWLLIWFKFA), 221 to 241 (ILFSLPIWAIVVNNFTFHYAL), 269 to 289 (LPYLNMFLFSNIGGVLADHLI), 301 to 321 (KLLNTVGFVVSAIALMALPLF), 327 to 347 (AIFCSSVSLGFLALGRAGFAV), 356 to 376 (FAGIVMGISNTAGTLAGIVGV), and 401 to 421 (TVFFVPGYLCIFSSFIFLIFS).

It belongs to the major facilitator superfamily. Sodium/anion cotransporter (TC 2.A.1.14) family.

It localises to the cell membrane. Functionally, probable anion transporter. The chain is Probable anion transporter 6 (PHT4;6) from Oryza sativa subsp. japonica (Rice).